The chain runs to 155 residues: Altered inheritance rate of mitochondria protein 29 (155 aa).

Residue S78 is modified to Phosphoserine.

It belongs to the UPF0538 family.

It is found in the cytoplasm. Its function is as follows. May be involved in mitochondrial organization and biogenesis. The chain is Altered inheritance rate of mitochondria protein 29 (AIM29) from Saccharomyces cerevisiae (strain ATCC 204508 / S288c) (Baker's yeast).